The chain runs to 146 residues: TFLTPEENGHVTSLWGKVDVEKVGGEALGRLLVVYPWTQRFFESFGDLSTPSAIMGNPKVKAHGKKVLSAFSEGLHHLDNLKGTFAQLSELHCDKLHVDPQNFTLLGNVLVIVLAEHFGNAFSPPVQAAFQKVVTGVANALAHKYH.

The 145-residue stretch at 2–146 (FLTPEENGHV…VANALAHKYH (145 aa)) folds into the Globin domain. A Phosphothreonine modification is found at threonine 12. The residue at position 44 (serine 44) is a Phosphoserine. Lysine 59 bears the N6-acetyllysine mark. Histidine 63 serves as a coordination point for heme b. Residue lysine 82 is modified to N6-acetyllysine. Histidine 92 is a heme b binding site. Cysteine 93 carries the post-translational modification S-nitrosocysteine. Lysine 144 is subject to N6-acetyllysine.

This sequence belongs to the globin family. Heterotetramer of two alpha chains and two beta chains. Red blood cells.

Its function is as follows. Involved in oxygen transport from the lung to the various peripheral tissues. The sequence is that of Hemoglobin subunit beta (HBB) from Hapalemur griseus (Gray gentle lemur).